A 195-amino-acid chain; its full sequence is Probable prefoldin subunit 3 (195 aa).

It belongs to the prefoldin subunit alpha family. In terms of assembly, heterohexamer of two PFD-alpha type and four PFD-beta type subunits.

Binds specifically to cytosolic chaperonin (c-CPN) and transfers target proteins to it. Binds to nascent polypeptide chain and promotes folding in an environment in which there are many competing pathways for nonnative proteins. The protein is Probable prefoldin subunit 3 (pfdn3) of Dictyostelium discoideum (Social amoeba).